The primary structure comprises 92 residues: Small ribosomal subunit protein uS19 (92 aa).

It belongs to the universal ribosomal protein uS19 family.

Its function is as follows. Protein S19 forms a complex with S13 that binds strongly to the 16S ribosomal RNA. This is Small ribosomal subunit protein uS19 from Rickettsia akari (strain Hartford).